Here is a 311-residue protein sequence, read N- to C-terminus: Pyrimidine-specific ribonucleoside hydrolase RihA (311 aa).

The active site involves His-240.

Belongs to the IUNH family. RihA subfamily.

Functionally, hydrolyzes with equal efficiency cytidine or uridine to ribose and cytosine or uracil, respectively. This is Pyrimidine-specific ribonucleoside hydrolase RihA from Escherichia coli O157:H7.